The following is a 418-amino-acid chain: Light-independent protochlorophyllide reductase subunit N (418 aa).

[4Fe-4S] cluster contacts are provided by Cys-17, Cys-42, and Cys-103.

It belongs to the BchN/ChlN family. As to quaternary structure, protochlorophyllide reductase is composed of three subunits; ChlL, ChlN and ChlB. Forms a heterotetramer of two ChlB and two ChlN subunits. [4Fe-4S] cluster serves as cofactor.

It carries out the reaction chlorophyllide a + oxidized 2[4Fe-4S]-[ferredoxin] + 2 ADP + 2 phosphate = protochlorophyllide a + reduced 2[4Fe-4S]-[ferredoxin] + 2 ATP + 2 H2O. It participates in porphyrin-containing compound metabolism; chlorophyll biosynthesis (light-independent). Functionally, component of the dark-operative protochlorophyllide reductase (DPOR) that uses Mg-ATP and reduced ferredoxin to reduce ring D of protochlorophyllide (Pchlide) to form chlorophyllide a (Chlide). This reaction is light-independent. The NB-protein (ChlN-ChlB) is the catalytic component of the complex. This is Light-independent protochlorophyllide reductase subunit N from Prochlorococcus marinus (strain SARG / CCMP1375 / SS120).